The chain runs to 460 residues: Bifunctional protein GlmU (460 aa).

Positions 1–237 are pyrophosphorylase; the sequence is MSSNQYTAGA…DPDLLGVNTP (237 aa). Residues 13-16, Lys27, Gln78, and 83-84 each bind UDP-N-acetyl-alpha-D-glucosamine; these read LAAG and GT. Asp109 provides a ligand contact to Mg(2+). UDP-N-acetyl-alpha-D-glucosamine-binding residues include Gly146, Glu160, Asn177, and Asn235. Residue Asn235 participates in Mg(2+) binding. Residues 238–258 form a linker region; that stretch reads AELMRSEELLRENIVTRHLHN. The segment at 259–460 is N-acetyltransferase; that stretch reads GVHVHAAGSV…QKNLRKTRHS (202 aa). UDP-N-acetyl-alpha-D-glucosamine contacts are provided by Arg341 and Lys359. His371 acts as the Proton acceptor in catalysis. UDP-N-acetyl-alpha-D-glucosamine is bound by residues Tyr374 and Asn385. Acetyl-CoA is bound by residues Ala388, 394–395, Ser413, Ala431, and Arg448; that span reads NY.

In the N-terminal section; belongs to the N-acetylglucosamine-1-phosphate uridyltransferase family. The protein in the C-terminal section; belongs to the transferase hexapeptide repeat family. As to quaternary structure, homotrimer. The cofactor is Mg(2+).

The protein localises to the cytoplasm. It carries out the reaction alpha-D-glucosamine 1-phosphate + acetyl-CoA = N-acetyl-alpha-D-glucosamine 1-phosphate + CoA + H(+). It catalyses the reaction N-acetyl-alpha-D-glucosamine 1-phosphate + UTP + H(+) = UDP-N-acetyl-alpha-D-glucosamine + diphosphate. It participates in nucleotide-sugar biosynthesis; UDP-N-acetyl-alpha-D-glucosamine biosynthesis; N-acetyl-alpha-D-glucosamine 1-phosphate from alpha-D-glucosamine 6-phosphate (route II): step 2/2. The protein operates within nucleotide-sugar biosynthesis; UDP-N-acetyl-alpha-D-glucosamine biosynthesis; UDP-N-acetyl-alpha-D-glucosamine from N-acetyl-alpha-D-glucosamine 1-phosphate: step 1/1. It functions in the pathway bacterial outer membrane biogenesis; LPS lipid A biosynthesis. Catalyzes the last two sequential reactions in the de novo biosynthetic pathway for UDP-N-acetylglucosamine (UDP-GlcNAc). The C-terminal domain catalyzes the transfer of acetyl group from acetyl coenzyme A to glucosamine-1-phosphate (GlcN-1-P) to produce N-acetylglucosamine-1-phosphate (GlcNAc-1-P), which is converted into UDP-GlcNAc by the transfer of uridine 5-monophosphate (from uridine 5-triphosphate), a reaction catalyzed by the N-terminal domain. The chain is Bifunctional protein GlmU from Oleidesulfovibrio alaskensis (strain ATCC BAA-1058 / DSM 17464 / G20) (Desulfovibrio alaskensis).